The sequence spans 327 residues: Phenylalanine--tRNA ligase alpha subunit (327 aa).

A Mg(2+)-binding site is contributed by Glu252.

It belongs to the class-II aminoacyl-tRNA synthetase family. Phe-tRNA synthetase alpha subunit type 1 subfamily. In terms of assembly, tetramer of two alpha and two beta subunits. It depends on Mg(2+) as a cofactor.

It localises to the cytoplasm. The catalysed reaction is tRNA(Phe) + L-phenylalanine + ATP = L-phenylalanyl-tRNA(Phe) + AMP + diphosphate + H(+). This is Phenylalanine--tRNA ligase alpha subunit from Shewanella baltica (strain OS223).